The chain runs to 67 residues: Large ribosomal subunit protein bL35 (67 aa).

The span at 1 to 11 (MPKLKTRKAAA) shows a compositional bias: basic residues. The interval 1–22 (MPKLKTRKAAAKRFEATGSGKK) is disordered.

The protein belongs to the bacterial ribosomal protein bL35 family.

In Microcystis aeruginosa (strain NIES-843 / IAM M-2473), this protein is Large ribosomal subunit protein bL35.